The sequence spans 123 residues: Large ribosomal subunit protein eL8 (123 aa).

This sequence belongs to the eukaryotic ribosomal protein eL8 family. Part of the 50S ribosomal subunit. Probably part of the RNase P complex.

The protein resides in the cytoplasm. Functionally, multifunctional RNA-binding protein that recognizes the K-turn motif in ribosomal RNA, the RNA component of RNase P, box H/ACA, box C/D and box C'/D' sRNAs. The polypeptide is Large ribosomal subunit protein eL8 (Methanopyrus kandleri (strain AV19 / DSM 6324 / JCM 9639 / NBRC 100938)).